A 78-amino-acid polypeptide reads, in one-letter code: Probable [Fe-S]-dependent transcriptional repressor (78 aa).

Positions 56, 61, 64, and 70 each coordinate iron-sulfur cluster.

The protein belongs to the FeoC family.

Functionally, may function as a transcriptional regulator that controls feoABC expression. The polypeptide is Probable [Fe-S]-dependent transcriptional repressor (Escherichia coli O127:H6 (strain E2348/69 / EPEC)).